Here is a 230-residue protein sequence, read N- to C-terminus: Ribose-5-phosphate isomerase A (230 aa).

Substrate contacts are provided by residues 31–34 (TGST), 88–91 (DGSD), and 101–104 (KGGG). Catalysis depends on E110, which acts as the Proton acceptor. Substrate is bound at residue K128.

This sequence belongs to the ribose 5-phosphate isomerase family. Homodimer.

It carries out the reaction aldehydo-D-ribose 5-phosphate = D-ribulose 5-phosphate. It participates in carbohydrate degradation; pentose phosphate pathway; D-ribose 5-phosphate from D-ribulose 5-phosphate (non-oxidative stage): step 1/1. Functionally, catalyzes the reversible conversion of ribose-5-phosphate to ribulose 5-phosphate. This Lactobacillus helveticus (strain DPC 4571) protein is Ribose-5-phosphate isomerase A.